The following is a 284-amino-acid chain: Serine protease 57 (284 aa).

Residues 1–35 (MPSSTAMVPGTRGGWHCLVLTTAAALTQLMWLPGC) form the signal peptide. A Peptidase S1 domain is found at 40–269 (IVGGHEVTPH…FVTWIWDVVR (230 aa)). An intrachain disulfide couples Cys-65 to Cys-81. Active-site charge relay system residues include His-80 and Asp-128. Residue Asn-135 is glycosylated (N-linked (GlcNAc...) asparagine). Cystine bridges form between Cys-163-Cys-230, Cys-194-Cys-208, and Cys-220-Cys-245. Ser-224 serves as the catalytic Charge relay system.

This sequence belongs to the peptidase S1 family. Post-translationally, after cleavage of the signal peptide, the N-terminus is probably further processed by CTSC. Processing by CTSC is probably required for accumulation in cytoplasmic granules; in the absence of CTSC the protein does not accumulate. In terms of processing, N-glycosylated.

It localises to the cytoplasmic granule lumen. The protein localises to the secreted. Its function is as follows. Serine protease that cleaves preferentially after Arg residues. Can also cleave after citrulline (deimidated arginine) and methylarginine residues. The chain is Serine protease 57 (Prss57) from Mus musculus (Mouse).